We begin with the raw amino-acid sequence, 759 residues long: uncharacterized protein (759 aa).

Low complexity-rich tracts occupy residues 1–36, 142–211, and 221–347; these read MSSN…NETN, QQQN…NQHH, and NHSN…GSSS. Disordered stretches follow at residues 1–47, 142–380, 409–428, 463–504, and 654–759; these read MSSN…AQTP, QQQN…PSIG, NNNC…GLGY, IING…NFEN, and LVDD…YLNK. Over residues 348 to 360 the composition is skewed to polar residues; it reads PFQDQARSPSSSF. Composition is skewed to low complexity over residues 463-495 and 660-747; these read IING…GNNN and HISN…DNNN.

This is an uncharacterized protein from Dictyostelium discoideum (Social amoeba).